The following is a 225-amino-acid chain: Late gene expression regulator BDLF4 (225 aa).

A disordered region spans residues Met-1–Asn-20.

This sequence belongs to the herpesviridae UL92 family.

In terms of biological role, part of the viral pre-initiation complex (vPIC) that is responsible for the expression of vPIC-dependent late genes. vPIC is composed of at least BcRF1 that binds the viral TATT box, BDLF3.5, BDLF4, BFRF2, BGLF3, BGLF4 and BVLF1. This Homo sapiens (Human) protein is Late gene expression regulator BDLF4.